A 356-amino-acid chain; its full sequence is Protein U8 (356 aa).

This sequence belongs to the herpesviridae US22 family.

The polypeptide is Protein U8 (U8) (Homo sapiens (Human)).